The chain runs to 319 residues: HPr kinase/phosphorylase (319 aa).

Residues His146 and Lys167 contribute to the active site. 161–168 (GESGLGKS) is an ATP binding site. Residue Ser168 coordinates Mg(2+). Residue Asp185 is the Proton acceptor; for phosphorylation activity. Proton donor; for dephosphorylation activity of the active site. The segment at 209-218 (LEVRGIGLLD) is important for the catalytic mechanism of both phosphorylation and dephosphorylation. Glu210 provides a ligand contact to Mg(2+). Arg252 is an active-site residue. An important for the catalytic mechanism of dephosphorylation region spans residues 273 to 278 (QVVAGR).

The protein belongs to the HPrK/P family. Homohexamer. It depends on Mg(2+) as a cofactor.

The catalysed reaction is [HPr protein]-L-serine + ATP = [HPr protein]-O-phospho-L-serine + ADP + H(+). It catalyses the reaction [HPr protein]-O-phospho-L-serine + phosphate + H(+) = [HPr protein]-L-serine + diphosphate. In terms of biological role, catalyzes the ATP- as well as the pyrophosphate-dependent phosphorylation of a specific serine residue in HPr, a phosphocarrier protein of the phosphoenolpyruvate-dependent sugar phosphotransferase system (PTS). HprK/P also catalyzes the pyrophosphate-producing, inorganic phosphate-dependent dephosphorylation (phosphorolysis) of seryl-phosphorylated HPr (P-Ser-HPr). In Variovorax paradoxus (strain S110), this protein is HPr kinase/phosphorylase.